The following is an 834-amino-acid chain: DIS3-like exonuclease 2 (834 aa).

Residues 1–23 (MHNSEFLSPVQSGTQRGTNRSIL) are compositionally biased toward polar residues. Residues 1–35 (MHNSEFLSPVQSGTQRGTNRSILNNKKSGKGKKKS) form a disordered region. Residues Asp354 and Asp363 each coordinate Mg(2+).

Belongs to the RNR ribonuclease family. DIS3L2 subfamily. Requires Mg(2+) as cofactor. Mn(2+) serves as cofactor.

Its subcellular location is the cytoplasm. The protein localises to the P-body. Functionally, 3'-5'-exoribonuclease that specifically recognizes RNAs polyuridylated at their 3' end and mediates their degradation. Component of an exosome-independent RNA degradation pathway that mediates degradation of both mRNAs and miRNAs that have been polyuridylated by a terminal uridylyltransferase. Essential for correct mitosis, and negatively regulates cell proliferation. In Xenopus tropicalis (Western clawed frog), this protein is DIS3-like exonuclease 2.